The chain runs to 674 residues: Carbon monoxide dehydrogenase/acetyl-CoA synthase subunit beta (674 aa).

The interval methionine 1–arginine 25 is disordered. Residues cysteine 59, cysteine 67, cysteine 68, cysteine 71, cysteine 76, and cysteine 90 each coordinate [4Fe-4S] cluster. Positions 283, 317, 355, 470, 500, and 550 each coordinate [Ni-4Fe-4S] cluster.

In terms of assembly, tetramer of two alpha and two beta chains. [Ni-Fe-S] cluster is required as a cofactor. The cofactor is [4Fe-4S] cluster.

The enzyme catalyses CO + 2 oxidized [2Fe-2S]-[ferredoxin] + H2O = 2 reduced [2Fe-2S]-[ferredoxin] + CO2 + 2 H(+). Its function is as follows. The beta subunit (this protein) generates CO from CO(2), while the alpha subunit combines the CO with CoA and a methyl group to form acetyl-CoA. The methyl group, which is incorporated into acetyl-CoA, is transferred to the alpha subunit by a corrinoid iron-sulfur protein. The protein is Carbon monoxide dehydrogenase/acetyl-CoA synthase subunit beta of Moorella thermoacetica (Clostridium thermoaceticum).